A 201-amino-acid polypeptide reads, in one-letter code: Small ribosomal subunit protein uS4 (201 aa).

The S4 RNA-binding domain occupies 91–151 (SRLDNVVYRA…EKSQKMNWFE (61 aa)).

This sequence belongs to the universal ribosomal protein uS4 family. Part of the 30S ribosomal subunit. Contacts protein S5. The interaction surface between S4 and S5 is involved in control of translational fidelity.

Its function is as follows. One of the primary rRNA binding proteins, it binds directly to 16S rRNA where it nucleates assembly of the body of the 30S subunit. In terms of biological role, with S5 and S12 plays an important role in translational accuracy. The sequence is that of Small ribosomal subunit protein uS4 from Corynebacterium glutamicum (strain R).